Reading from the N-terminus, the 336-residue chain is Protein-glutamate methylesterase/protein-glutamine glutaminase 2 (336 aa).

Residues 2 to 119 enclose the Response regulatory domain; the sequence is KIAIVNDMPM…PNPKEAAAPL (118 aa). D53 is modified (4-aspartylphosphate). The region spanning 147-336 is the CheB-type methylesterase domain; that stretch reads PSRRDRLVAI…APRLIEVFTQ (190 aa). Catalysis depends on residues S159, H186, and D279.

Belongs to the CheB family. Post-translationally, phosphorylated by CheA. Phosphorylation of the N-terminal regulatory domain activates the methylesterase activity.

Its subcellular location is the cytoplasm. The catalysed reaction is [protein]-L-glutamate 5-O-methyl ester + H2O = L-glutamyl-[protein] + methanol + H(+). It catalyses the reaction L-glutaminyl-[protein] + H2O = L-glutamyl-[protein] + NH4(+). Its function is as follows. Involved in chemotaxis. Part of a chemotaxis signal transduction system that modulates chemotaxis in response to various stimuli. Catalyzes the demethylation of specific methylglutamate residues introduced into the chemoreceptors (methyl-accepting chemotaxis proteins or MCP) by CheR. Also mediates the irreversible deamidation of specific glutamine residues to glutamic acid. The protein is Protein-glutamate methylesterase/protein-glutamine glutaminase 2 of Pseudomonas syringae pv. syringae (strain B728a).